The primary structure comprises 404 residues: MTTYQTLFLIPLAISTLVTAWLPETDKTITSRNGTNLFASSKGKIRGVNMGSQFVFEPWIAEKAWSSMGCKGQKSEFDCVVSLGQDAANKAFAQHWGSWITQDDITEIQSYTLNTIRVPIGYWMKEDLVNKTSEHFPQGGFAYLEKLCGWASDAGLYIILDLHGAPGAQTPHNPFTGQYASTAGFYNDYQFGRALEFLEWITTKVHQSDSFRNVGMLEIVNEPLQNAQKVGSMRSTYYPDAFKRIRAAEQKLNVSKSGYLHIQMMDKLWGSGDPEEYLTDKYYVAYDDHRYLKWDPKVNVSKENYISTSCSDELDSNTPTIVGEWSLSVPDDVASTPDWDMDTNKDFYKKWFAAQITAYEKQRGWVFWTWKTQLGGYRWSYKDAVAAGVVPEDIDSALNMGVCN.

The signal sequence occupies residues 1–20; that stretch reads MTTYQTLFLIPLAISTLVTA. Residues N33 and N130 are each glycosylated (N-linked (GlcNAc...) asparagine). The active-site Proton donor is E222. 2 N-linked (GlcNAc...) asparagine glycosylation sites follow: N253 and N299. The active-site Nucleophile is the E324.

It belongs to the glycosyl hydrolase 5 (cellulase A) family.

The protein resides in the secreted. The catalysed reaction is Random hydrolysis of (1-&gt;6)-linkages in (1-&gt;6)-beta-D-glucans.. In terms of biological role, beta-glucanases participate in the metabolism of beta-glucan, the main structural component of the cell wall. Acts on lutean, pustulan and 1,6-oligo-beta-D-glucosides. The sequence is that of Probable glucan endo-1,6-beta-glucosidase B (exgB) from Aspergillus terreus (strain NIH 2624 / FGSC A1156).